The following is a 359-amino-acid chain: Holliday junction branch migration complex subunit RuvB (359 aa).

Residues 1–187 (MSGLEHGDAS…FGFTAHLEFY (187 aa)) are large ATPase domain (RuvB-L). ATP contacts are provided by residues Leu-26, Arg-27, Gly-68, Lys-71, Thr-72, Thr-73, 134 to 136 (EDY), Arg-177, Tyr-187, and Arg-224. Thr-72 provides a ligand contact to Mg(2+). Residues 188–257 (ETHELEQVIE…SVRAALDLYD (70 aa)) are small ATPAse domain (RuvB-S). The interval 260–359 (PLGLDRLDRA…VAGALFGDEL (100 aa)) is head domain (RuvB-H). The DNA site is built by Arg-315 and Arg-320.

It belongs to the RuvB family. In terms of assembly, homohexamer. Forms an RuvA(8)-RuvB(12)-Holliday junction (HJ) complex. HJ DNA is sandwiched between 2 RuvA tetramers; dsDNA enters through RuvA and exits via RuvB. An RuvB hexamer assembles on each DNA strand where it exits the tetramer. Each RuvB hexamer is contacted by two RuvA subunits (via domain III) on 2 adjacent RuvB subunits; this complex drives branch migration. In the full resolvosome a probable DNA-RuvA(4)-RuvB(12)-RuvC(2) complex forms which resolves the HJ.

The protein localises to the cytoplasm. It catalyses the reaction ATP + H2O = ADP + phosphate + H(+). The RuvA-RuvB-RuvC complex processes Holliday junction (HJ) DNA during genetic recombination and DNA repair, while the RuvA-RuvB complex plays an important role in the rescue of blocked DNA replication forks via replication fork reversal (RFR). RuvA specifically binds to HJ cruciform DNA, conferring on it an open structure. The RuvB hexamer acts as an ATP-dependent pump, pulling dsDNA into and through the RuvAB complex. RuvB forms 2 homohexamers on either side of HJ DNA bound by 1 or 2 RuvA tetramers; 4 subunits per hexamer contact DNA at a time. Coordinated motions by a converter formed by DNA-disengaged RuvB subunits stimulates ATP hydrolysis and nucleotide exchange. Immobilization of the converter enables RuvB to convert the ATP-contained energy into a lever motion, pulling 2 nucleotides of DNA out of the RuvA tetramer per ATP hydrolyzed, thus driving DNA branch migration. The RuvB motors rotate together with the DNA substrate, which together with the progressing nucleotide cycle form the mechanistic basis for DNA recombination by continuous HJ branch migration. Branch migration allows RuvC to scan DNA until it finds its consensus sequence, where it cleaves and resolves cruciform DNA. This Clavibacter michiganensis subsp. michiganensis (strain NCPPB 382) protein is Holliday junction branch migration complex subunit RuvB.